A 283-amino-acid chain; its full sequence is Flagellar filament 35 kDa core protein (283 aa).

The protein belongs to the bacterial flagellin family. The flagellum consists of two outer layers around a core that contains several antigenically related polypeptides.

Its subcellular location is the periplasmic flagellum. It localises to the periplasm. Component of the core of the flagella. The chain is Flagellar filament 35 kDa core protein (flaB) from Leptospira interrogans serogroup Icterohaemorrhagiae serovar copenhageni (strain Fiocruz L1-130).